The following is a 475-amino-acid chain: Aspartyl/glutamyl-tRNA(Asn/Gln) amidotransferase subunit B (475 aa).

The protein belongs to the GatB/GatE family. GatB subfamily. As to quaternary structure, heterotrimer of A, B and C subunits.

It catalyses the reaction L-glutamyl-tRNA(Gln) + L-glutamine + ATP + H2O = L-glutaminyl-tRNA(Gln) + L-glutamate + ADP + phosphate + H(+). The catalysed reaction is L-aspartyl-tRNA(Asn) + L-glutamine + ATP + H2O = L-asparaginyl-tRNA(Asn) + L-glutamate + ADP + phosphate + 2 H(+). Functionally, allows the formation of correctly charged Asn-tRNA(Asn) or Gln-tRNA(Gln) through the transamidation of misacylated Asp-tRNA(Asn) or Glu-tRNA(Gln) in organisms which lack either or both of asparaginyl-tRNA or glutaminyl-tRNA synthetases. The reaction takes place in the presence of glutamine and ATP through an activated phospho-Asp-tRNA(Asn) or phospho-Glu-tRNA(Gln). This Staphylococcus epidermidis (strain ATCC 12228 / FDA PCI 1200) protein is Aspartyl/glutamyl-tRNA(Asn/Gln) amidotransferase subunit B.